Reading from the N-terminus, the 484-residue chain is Serine protease HTR4 (484 aa).

Residues 1 to 28 (MARPLQRPAGLGPFVLLWLLLPAPSGRG) form the signal peptide. Residues 36-114 (PVPRCPAACE…GRPLGTCGCP (79 aa)) enclose the IGFBP N-terminal domain. 8 disulfide bridges follow: cysteine 40-cysteine 66, cysteine 44-cysteine 68, cysteine 49-cysteine 69, cysteine 55-cysteine 72, cysteine 80-cysteine 94, cysteine 88-cysteine 111, cysteine 113-cysteine 132, and cysteine 121-cysteine 157. Residues 105–159 (GRPLGTCGCPAAGATVCGSDGRTYRSLCALRAENRAARLRGALPAVPVQKGDCGD) enclose the Kazal-like domain. The tract at residues 209-369 (ASGFIVSEDG…IPSDRIRQFL (161 aa)) is serine protease. Active-site charge relay system residues include histidine 225, aspartate 255, and serine 333. The PDZ domain maps to 390–472 (LRMLPLTMNL…LSLLVRRKSQ (83 aa)).

The protein belongs to the peptidase S1C family.

Its subcellular location is the secreted. In terms of biological role, serine protease. This Bos taurus (Bovine) protein is Serine protease HTR4 (HTRA4).